Consider the following 394-residue polypeptide: Bifunctional enzyme IspD/IspF (394 aa).

The tract at residues 1–230 (MADTLAIVVA…AEALLGGGPV (230 aa)) is 2-C-methyl-D-erythritol 4-phosphate cytidylyltransferase. A 2-C-methyl-D-erythritol 2,4-cyclodiphosphate synthase region spans residues 231-394 (LVGFGYDVHR…RIVLPGDRVL (164 aa)). A divalent metal cation is bound by residues aspartate 237 and histidine 239. 4-CDP-2-C-methyl-D-erythritol 2-phosphate contacts are provided by residues 237-239 (DVH) and 263-264 (HS). Residue histidine 271 coordinates a divalent metal cation. Residues 285-287 (DIG), 290-294 (FPDDD), 361-364 (TTTE), and phenylalanine 368 each bind 4-CDP-2-C-methyl-D-erythritol 2-phosphate.

The protein in the N-terminal section; belongs to the IspD/TarI cytidylyltransferase family. IspD subfamily. It in the C-terminal section; belongs to the IspF family. It depends on a divalent metal cation as a cofactor.

The enzyme catalyses 2-C-methyl-D-erythritol 4-phosphate + CTP + H(+) = 4-CDP-2-C-methyl-D-erythritol + diphosphate. It carries out the reaction 4-CDP-2-C-methyl-D-erythritol 2-phosphate = 2-C-methyl-D-erythritol 2,4-cyclic diphosphate + CMP. Its pathway is isoprenoid biosynthesis; isopentenyl diphosphate biosynthesis via DXP pathway; isopentenyl diphosphate from 1-deoxy-D-xylulose 5-phosphate: step 2/6. It participates in isoprenoid biosynthesis; isopentenyl diphosphate biosynthesis via DXP pathway; isopentenyl diphosphate from 1-deoxy-D-xylulose 5-phosphate: step 4/6. Bifunctional enzyme that catalyzes the formation of 4-diphosphocytidyl-2-C-methyl-D-erythritol from CTP and 2-C-methyl-D-erythritol 4-phosphate (MEP) (IspD), and catalyzes the conversion of 4-diphosphocytidyl-2-C-methyl-D-erythritol 2-phosphate (CDP-ME2P) to 2-C-methyl-D-erythritol 2,4-cyclodiphosphate (ME-CPP) with a corresponding release of cytidine 5-monophosphate (CMP) (IspF). This is Bifunctional enzyme IspD/IspF from Desulforudis audaxviator (strain MP104C).